The chain runs to 722 residues: Protein HAPLESS 2-A (722 aa).

The N-terminal stretch at 1–24 is a signal peptide; that stretch reads MPRRRGTPLPTILLLLAFVGGACG. Residues 25 to 552 are Extracellular-facing; the sequence is TEILSKSRLE…LFDFGCHIQY (528 aa). 7 disulfide bridges follow: Cys-36/Cys-48, Cys-129/Cys-159, Cys-141/Cys-188, Cys-160/Cys-315, Cys-162/Cys-171, Cys-298/Cys-322, and Cys-435/Cys-473. The helical transmembrane segment at 553 to 573 threads the bilayer; that stretch reads VCIGWILLLLLIPAAVVFLWL. Residues 574-722 lie on the Cytoplasmic side of the membrane; sequence LHQEGLFDPL…HRDGHYSPSV (149 aa). Residues 598–641 show a composition bias toward basic residues; the sequence is RRRHQKGRHHRHHHDHRHRHGHSHGDHHHHYHGGHHQRRRHHHP. 2 disordered regions span residues 598–665 and 680–722; these read RRRH…RNHH and RLDR…SPSV. The span at 646-662 shows a compositional bias: basic and acidic residues; that stretch reads VEGHHHDRQQHSHEAGR. The segment covering 701–711 has biased composition (basic residues); that stretch reads RRSRHERHGGH. Residues 712-722 are compositionally biased toward basic and acidic residues; the sequence is GHRDGHYSPSV.

The protein belongs to the HAP2/GCS1 family.

The protein resides in the endoplasmic reticulum membrane. Its subcellular location is the cell membrane. In terms of biological role, required for male fertility. Plays a role in pollen tube guidance and successful gamete attachment. Essential for the fusion of gametes during double fertilization, where one male gamete fuses with the egg to produce a zygote, and another male gamete fuses with the central cell to produce the endosperm. Mediates the fusion of cell membranes. Not required for pollen tube outgrowth. This is Protein HAPLESS 2-A (HAP2A) from Oryza sativa subsp. japonica (Rice).